The following is a 141-amino-acid chain: Transcription antitermination protein NusB (141 aa).

This sequence belongs to the NusB family.

Its function is as follows. Involved in transcription antitermination. Required for transcription of ribosomal RNA (rRNA) genes. Binds specifically to the boxA antiterminator sequence of the ribosomal RNA (rrn) operons. The protein is Transcription antitermination protein NusB of Clostridium botulinum (strain Loch Maree / Type A3).